The sequence spans 164 residues: UPF0304 protein YfbU (164 aa).

This sequence belongs to the UPF0304 family.

This is UPF0304 protein YfbU from Escherichia coli O139:H28 (strain E24377A / ETEC).